Here is a 494-residue protein sequence, read N- to C-terminus: Uric acid degradation bifunctional protein PucL (494 aa).

Residues 1–174 are OHCU decarboxylase; that stretch reads MFTMDDLNQM…EKGETQMKRT (174 aa). His68 (proton donor; for OHCU decarboxylase activity) is an active-site residue. Residues Pro69, 81-85, and 116-120 each bind 5-hydroxy-2-oxo-4-ureido-2,5-dihydro-1H-imidazole-5-carboxylate; these read SVREQ and FILAV. The urate oxidase stretch occupies residues 175–494; it reads MSYGKGNVFA…AAEKCRSLKA (320 aa). The Charge relay system; for urate oxidase activity role is filled by Lys179. Residue Lys190 is the Charge relay system of the active site. The active-site Charge relay system; for urate oxidase activity is the Thr239. 7 residues coordinate urate: Thr239, Asp240, Phe349, Arg366, Ile414, Gln415, and Asn441.

The protein in the N-terminal section; belongs to the OHCU decarboxylase family. In the C-terminal section; belongs to the uricase family.

It catalyses the reaction 5-hydroxy-2-oxo-4-ureido-2,5-dihydro-1H-imidazole-5-carboxylate + H(+) = (S)-allantoin + CO2. It carries out the reaction urate + O2 + H2O = 5-hydroxyisourate + H2O2. It functions in the pathway purine metabolism; urate degradation; (S)-allantoin from urate: step 1/3. It participates in purine metabolism; urate degradation; (S)-allantoin from urate: step 3/3. In terms of biological role, catalyzes two steps in the degradation of uric acid, i.e. the oxidation of uric acid to 5-hydroxyisourate (HIU) and the stereoselective decarboxylation of 2-oxo-4-hydroxy-4-carboxy-5-ureidoimidazoline (OHCU) to (S)-allantoin. This chain is Uric acid degradation bifunctional protein PucL (pucL), found in Bacillus subtilis (strain 168).